The chain runs to 1138 residues: Myelin regulatory factor (1138 aa).

Residues 1–768 (MEVVDETEAL…CISQRFLQGT (768 aa)) are Cytoplasmic-facing. 4 disordered regions span residues 56–150 (TASF…YSPQ), 171–200 (VSSRLEHPPPPPAHLPGPPPPPPPPPHYPV), 246–267 (AELPPHPSKKRKHSESPPNTLN), and 279–339 (PGTV…SDSL). Over residues 67–88 (PGSSGLHHLSPPGSGPSPGRHG) the composition is skewed to low complexity. Position 123 is an N6-acetyllysine (lysine 123). Pro residues predominate over residues 178–198 (PPPPPAHLPGPPPPPPPPPHY). Residues 250–541 (PHPSKKRKHS…SNPGQFESDS (292 aa)) constitute a DNA-binding region (NDT80). Positions 254 to 257 (KKRK) match the Nuclear localization signal motif. Residues 286–302 (PPHPARAPSPPWPPQGP) show a composition bias toward pro residues. Low complexity predominate over residues 329–339 (SPGLLQDSDSL). Residues 491 to 494 (KKGK) carry the Nuclear localization signal motif. Positions 587 to 696 (SDLRAKEHVQ…KLTDNLETRI (110 aa)) constitute a Peptidase S74 domain. Residues 680–711 (GAVKELCKLTDNLETRIDELERWSHKLAKLRR) are a coiled coil. A compositionally biased stretch (polar residues) spans 721 to 733 (SGAFSHAGSQFSR). Positions 721-753 (SGAFSHAGSQFSRAGSVPHKKRPPKLANKSSPA) are disordered. The tract at residues 765–1003 (LQGTIIALVV…QGQLDPAPSL (239 aa)) is required for interaction with TMEM98. Residues 769 to 789 (IIALVVVMAFSVVSMSTLYVL) traverse the membrane as a helical segment. Over 790-1138 (SLRSEEDLVD…YYFHFYRLCD (349 aa)) the chain is Lumenal. Positions 891 to 900 (ATDPALGPTL) are enriched in low complexity. 2 disordered regions span residues 891–922 (ATDPALGPTLTPTPSPSSNPKHSGPGQMAPLP) and 951–999 (ASPV…QLDP). 2 stretches are compositionally biased toward polar residues: residues 961–974 (QSKTKNSPSFNLQS) and 987–999 (PAQFTQTQGQLDP). 3 N-linked (GlcNAc...) asparagine glycosylation sites follow: asparagine 1030, asparagine 1052, and asparagine 1116.

It belongs to the MRF family. Homotrimer. Interacts (via C-terminal region) with TMEM98; the interaction inhibits MYRF self-cleavage. Glycosylated. Post-translationally, follows autocatalytic cleavage via the peptidase S74 domain. Autoprocessing is apparently constitutive and is essential for transcriptional activity. Autocatalytic cleavage is inhibited by interaction with TMEM98. Specifically expressed by postmitotic oligodendrocytes in the CNS. Not detected in the peripheral nervous system (PNS).

The protein localises to the endoplasmic reticulum membrane. It is found in the nucleus. The protein resides in the cytoplasm. In terms of biological role, constitutes a precursor of the transcription factor. Mediates the autocatalytic cleavage that releases the Myelin regulatory factor, N-terminal component that specifically activates transcription of central nervous system (CNS) myelin genes. Functionally, membrane-bound part that has no transcription factor activity and remains attached to the endoplasmic reticulum membrane following cleavage. Transcription factor that specifically activates expression of myelin genes such as MBP, MOG, MAG, DUSP15 and PLP1 during oligodendrocyte (OL) maturation, thereby playing a central role in oligodendrocyte maturation and CNS myelination. Specifically recognizes and binds DNA sequence 5'-CTGGYAC-3' in the regulatory regions of myelin-specific genes and directly activates their expression. Not only required during oligodendrocyte differentiation but is also required on an ongoing basis for the maintenance of expression of myelin genes and for the maintenance of a mature, viable oligodendrocyte phenotype. The chain is Myelin regulatory factor (Myrf) from Mus musculus (Mouse).